The chain runs to 208 residues: Small ribosomal subunit protein uS4 (208 aa).

The interval 32–53 (LNRKRGKNSPGQHGASKVKMSD) is disordered. An S4 RNA-binding domain is found at 99–161 (LRLDNVVYRL…YKSNVIIKKL (63 aa)).

This sequence belongs to the universal ribosomal protein uS4 family. Part of the 30S ribosomal subunit. Contacts protein S5. The interaction surface between S4 and S5 is involved in control of translational fidelity.

One of the primary rRNA binding proteins, it binds directly to 16S rRNA where it nucleates assembly of the body of the 30S subunit. Its function is as follows. With S5 and S12 plays an important role in translational accuracy. The polypeptide is Small ribosomal subunit protein uS4 (Endomicrobium trichonymphae).